The following is a 443-amino-acid chain: MIVSRAFAGKRYAVLGLARSGLASVESLLAGGADVTVWDNREEPRSAFEGSCTIADPLSIDLTGFAGVVVSPGVPLNRHPIADHARAAGVPVIGDIELFAQARADLPPHRVVGITGTNGKSTTTMLVHHICAAAGLPARLGGNIGLPILGQEPLPEGGVYVLELSSYQIDLTQSLACDVAALINLSPDHLDRYDGFAGYAASKARLFAMQRADQHAVFGCGDEHTLEIAREASATHDTGFVHVVQPSALHGQLEWPSLQGPHNLQNAAIAVEIARQLGIAEDIWRSALASFVGLPHRMERVAEANGVLFVNDSKATNPASTAPALGAYPRIHWILGGLPKSDNLDECAPYFDHVVAAYTIGEAGPRFAEILEPVMPVTRSEMLCDAVRQAMEAAQPGDVVMLSPACASFDQFRDFEARGDSFRQIVEALIEDREAPCPDGTPT.

Position 116-122 (116-122 (GTNGKST)) interacts with ATP.

The protein belongs to the MurCDEF family.

The protein localises to the cytoplasm. It carries out the reaction UDP-N-acetyl-alpha-D-muramoyl-L-alanine + D-glutamate + ATP = UDP-N-acetyl-alpha-D-muramoyl-L-alanyl-D-glutamate + ADP + phosphate + H(+). Its pathway is cell wall biogenesis; peptidoglycan biosynthesis. In terms of biological role, cell wall formation. Catalyzes the addition of glutamate to the nucleotide precursor UDP-N-acetylmuramoyl-L-alanine (UMA). This chain is UDP-N-acetylmuramoylalanine--D-glutamate ligase, found in Novosphingobium aromaticivorans (strain ATCC 700278 / DSM 12444 / CCUG 56034 / CIP 105152 / NBRC 16084 / F199).